Reading from the N-terminus, the 335-residue chain is MTLPLLGPMSFSGFEHPWFFLFLIVVLALAGLYVIVALARQRRILRFANMELLESVAPNRPNRWRHLPAILLVASLVLLTVAMAGPTRDVRVPRNRAVVMLVIDVSQSMRATDVSPSRLAAAQEASKQFADELTPGINLGLIAYAGTATVLVSPTTNREATKTAIDKLQLADRTATGEGIFTALQAIATVGAVIGGGDEPPPARIVLFSDGKETVPSNPDNPKGAFTAARTAKDQGVPISTISFGTPYGYVEINEQRQPVPVDDQMLKKIADLSEGEAFTASSLEQLREVYANLQQQIGYETIKGDASVGWLRLGALVLALSALAALLLNRRLPG.

2 helical membrane passes run 18 to 38 and 67 to 87; these read WFFLFLIVVLALAGLYVIVAL and LPAILLVASLVLLTVAMAGPT. One can recognise a VWFA domain in the interval 98-294; the sequence is VVMLVIDVSQ…EQLREVYANL (197 aa). Residues 309–329 traverse the membrane as a helical segment; that stretch reads VGWLRLGALVLALSALAALLL.

This sequence belongs to the UPF0353 family.

The protein localises to the cell membrane. The chain is UPF0353 protein Mjls_2492 from Mycobacterium sp. (strain JLS).